We begin with the raw amino-acid sequence, 177 residues long: O-acetyl-ADP-ribose deacetylase (177 aa).

The Macro domain maps to 1 to 175; it reads MKTRIHVVQG…LYERLLTQQG (175 aa). Residues 11 to 12, Asn25, 33 to 35, and 122 to 126 contribute to the substrate site; these read DI, GVD, and STGVY. Residue Asp35 is the Proton acceptor of the active site.

This sequence belongs to the MacroD-type family. YmdB subfamily. Homodimer. Interacts with RNase III.

The enzyme catalyses 3''-O-acetyl-ADP-D-ribose + H2O = ADP-D-ribose + acetate + H(+). It carries out the reaction 2''-O-acetyl-ADP-D-ribose + H2O = ADP-D-ribose + acetate + H(+). Functionally, deacetylates O-acetyl-ADP ribose to yield ADP-ribose and free acetate. Down-regulates ribonuclease 3 (RNase III) activity. Acts by interacting directly with the region of the ribonuclease that is required for dimerization/activation. The sequence is that of O-acetyl-ADP-ribose deacetylase from Shigella dysenteriae serotype 1 (strain Sd197).